A 518-amino-acid chain; its full sequence is Protein translocase subunit SecD (518 aa).

6 consecutive transmembrane segments (helical) span residues 9 to 29, 356 to 376, 377 to 397, 406 to 426, 463 to 483, and 486 to 506; these read IVLSIICTVFAIICALPNFIQ, GKKAGLIGFVAVCIFMILSYG, VIGLFANIALILALLYILALL, LPGIAGIILTIGMAVDANVLI, LIVAFALYIFGVGAIKGFAVA, and IGIISSMFSAIIITKLLIDVW.

It belongs to the SecD/SecF family. SecD subfamily. In terms of assembly, forms a complex with SecF. Part of the essential Sec protein translocation apparatus which comprises SecA, SecYEG and auxiliary proteins SecDF-YajC and YidC.

It localises to the cell inner membrane. Part of the Sec protein translocase complex. Interacts with the SecYEG preprotein conducting channel. SecDF uses the proton motive force (PMF) to complete protein translocation after the ATP-dependent function of SecA. The protein is Protein translocase subunit SecD of Rickettsia prowazekii (strain Madrid E).